We begin with the raw amino-acid sequence, 426 residues long: MQIERIKGFRDFYPEDMEIEKFIFETASSVAESYGFKRIDFPSLEYIDLYRIKSGEELLNQTYSFTDRGGREVTLIPEATPSTVRMLTSRKDIAKPVRWYSFPKVWRYEEPQAGRFREHYQFNADIFGPSNEEADAEIISLASGILDGLGLSGAYEIRVNSRIMMEDILNGMGIADPYTVFSIVDRFHKVSKETFVDDLMSVGLSEENSNTIYRMCSEASEPGGISGLFGSGKVSKAAERLIRTIDILKEYGVKSVKYDFSIVRGLSYYTGLVFEAYDKSGQFRAILGGGRYDNLAKLFSEQDIPAVGFGMGDAVISLLLKSKGVKAPHAKKSVYVCRVGTVKAERIASISKMLRSSGFIVSAEIMDRSLSSQLKYASYEGCEYAVIAGERDLENNSVTVRDLSTGEQEIVTLGDLVPFLEKSTSY.

The protein belongs to the class-II aminoacyl-tRNA synthetase family.

Its subcellular location is the cytoplasm. It catalyses the reaction tRNA(His) + L-histidine + ATP = L-histidyl-tRNA(His) + AMP + diphosphate + H(+). The chain is Histidine--tRNA ligase (hisS) from Thermoplasma volcanium (strain ATCC 51530 / DSM 4299 / JCM 9571 / NBRC 15438 / GSS1).